Here is a 207-residue protein sequence, read N- to C-terminus: Frataxin, mitochondrial (207 aa).

The N-terminal 40 residues, 1 to 40, are a transit peptide targeting the mitochondrion; the sequence is MWAFGGRAAVGLLPRTASRASAWVGNPRWREPIVTCGRRG.

This sequence belongs to the frataxin family. As to quaternary structure, component of the mitochondrial core iron-sulfur cluster (ISC) complex composed of NFS1, LYRM4, NDUFAB1, ISCU, FXN, and FDX2; this complex is a heterohexamer containing two copies of each monomer. Homodimer. Monomer (probable predominant form). Oligomer. Monomers and polymeric aggregates of &gt;1 MDa have been isolated from mitochondria. A small fraction of heterologous overexpressed recombinant frataxin forms high-molecular weight aggregates that incorporate iron. Interacts with LYRM4. Interacts (via ferrous form) with ISCU; the interaction is possible when both are bound to the dimeric form of the cysteine desulfurase complex (NFS1:LYRM4) and the interaction enhances FXN interaction to the dimeric form of the cysteine desulfurase complex (NFS1:LYRM4). Interacts with FECH; one iron-bound FXN monomer seems to interact with a FECH homodimer. Interacts with SDHA and SDHB. Interacts with ACO2; the interaction is dependent on citrate. Interacts with HSPA9. Component of a complex composed of FXN, NFS1, LYRM4 and ISCU. Interacts with ACO1. Interacts with ISCU (cytoplasmic form). In terms of processing, processed in two steps by mitochondrial processing peptidase (MPP). MPP first cleaves the precursor to intermediate form and subsequently converts the intermediate to yield frataxin mature form (frataxin(81-210)) which is the predominant form. The additional forms, frataxin(56-210) and frataxin(78-210), seem to be produced when the normal maturation process is impaired; their physiological relevance is unsure. Heart, liver, skeletal muscle, kidney, spleen and thymus. Weakly expressed in the brain and lung.

It is found in the mitochondrion. Its subcellular location is the cytoplasm. The protein resides in the cytosol. It carries out the reaction 4 Fe(2+) + O2 + 4 H(+) = 4 Fe(3+) + 2 H2O. Its function is as follows. Functions as an activator of persulfide transfer to the scaffoding protein ISCU as component of the core iron-sulfur cluster (ISC) assembly complex and participates to the [2Fe-2S] cluster assembly. Accelerates sulfur transfer from NFS1 persulfide intermediate to ISCU and to small thiols such as L-cysteine and glutathione leading to persulfuration of these thiols and ultimately sulfide release. Binds ferrous ion and is released from FXN upon the addition of both L-cysteine and reduced FDX2 during [2Fe-2S] cluster assembly. The core iron-sulfur cluster (ISC) assembly complex is involved in the de novo synthesis of a [2Fe-2S] cluster, the first step of the mitochondrial iron-sulfur protein biogenesis. This process is initiated by the cysteine desulfurase complex (NFS1:LYRM4:NDUFAB1) that produces persulfide which is delivered on the scaffold protein ISCU in a FXN-dependent manner. Then this complex is stabilized by FDX2 which provides reducing equivalents to accomplish the [2Fe-2S] cluster assembly. Finally, the [2Fe-2S] cluster is transferred from ISCU to chaperone proteins, including HSCB, HSPA9 and GLRX5. May play a role in the protection against iron-catalyzed oxidative stress through its ability to catalyze the oxidation of Fe(2+) to Fe(3+); the oligomeric form but not the monomeric form has in vitro ferroxidase activity. May be able to store large amounts of iron in the form of a ferrihydrite mineral by oligomerization; however, the physiological relevance is unsure as reports are conflicting and the function has only been shown using heterologous overexpression systems. May function as an iron chaperone protein that protects the aconitase [4Fe-4S]2+ cluster from disassembly and promotes enzyme reactivation. May play a role as a high affinity iron binding partner for FECH that is capable of both delivering iron to ferrochelatase and mediating the terminal step in mitochondrial heme biosynthesis. Modulates the RNA-binding activity of ACO1. May be involved in the cytoplasmic iron-sulfur protein biogenesis. May contribute to oxidative stress resistance and overall cell survival. This is Frataxin, mitochondrial from Mus musculus (Mouse).